A 276-amino-acid polypeptide reads, in one-letter code: NAD(+)--dinitrogen-reductase ADP-D-ribosyltransferase (276 aa).

In terms of assembly, monomer.

The enzyme catalyses L-arginyl-[dinitrogen reductase] + NAD(+) = N(omega)-alpha-(ADP-D-ribosyl)-L-arginyl-[dinitrogen reductase] + nicotinamide + H(+). In terms of biological role, involved in the regulation of the nitrogen fixation activity by the reversible ADP-ribosylation of the dinitrogenase reductase component of the nitrogenase enzyme complex. The ADP-ribosyltransferase (DraT) transfers the ADP-ribose group from NAD to dinitrogenase reductase. The ADP-ribose group is removed through the action of the ADP-ribosylglycohydrolase (DraG). This chain is NAD(+)--dinitrogen-reductase ADP-D-ribosyltransferase (draT), found in Rhodospirillum rubrum.